We begin with the raw amino-acid sequence, 138 residues long: Small ribosomal subunit protein uS17 (138 aa).

2 stretches are compositionally biased toward basic and acidic residues: residues 1-18 (MSEE…RAEA) and 43-55 (AFDR…QKDT). A disordered region spans residues 1–62 (MSEEERNRGA…KDTRRGRRKE (62 aa)).

Belongs to the universal ribosomal protein uS17 family. As to quaternary structure, part of the 30S ribosomal subunit.

Functionally, one of the primary rRNA binding proteins, it binds specifically to the 5'-end of 16S ribosomal RNA. This is Small ribosomal subunit protein uS17 from Rubrobacter xylanophilus (strain DSM 9941 / JCM 11954 / NBRC 16129 / PRD-1).